The primary structure comprises 161 residues: Large ribosomal subunit protein uL16 (161 aa).

Residues 140-161 (LNKGNYKPAKTPVTADDSESSS) form a disordered region.

Belongs to the universal ribosomal protein uL16 family. Part of the 50S ribosomal subunit.

Binds 23S rRNA and is also seen to make contacts with the A and possibly P site tRNAs. The sequence is that of Large ribosomal subunit protein uL16 from Prochlorococcus marinus (strain NATL1A).